The following is a 368-amino-acid chain: GTPase Obg (368 aa).

The Obg domain occupies 1–159 (MQFIDQAEIE…RQLRLELKLL (159 aa)). In terms of domain architecture, OBG-type G spans 160–328 (AEVGIIGLPN…LMQLVWQWLD (169 aa)). Residues 166-173 (GLPNAGKS), 191-195 (FTTLV), 213-216 (DIPG), 280-283 (NKID), and 309-311 (SAA) each bind GTP. Ser-173 and Thr-193 together coordinate Mg(2+).

It belongs to the TRAFAC class OBG-HflX-like GTPase superfamily. OBG GTPase family. In terms of assembly, monomer. The cofactor is Mg(2+).

The protein localises to the cytoplasm. An essential GTPase which binds GTP, GDP and possibly (p)ppGpp with moderate affinity, with high nucleotide exchange rates and a fairly low GTP hydrolysis rate. Plays a role in control of the cell cycle, stress response, ribosome biogenesis and in those bacteria that undergo differentiation, in morphogenesis control. The polypeptide is GTPase Obg (Synechocystis sp. (strain ATCC 27184 / PCC 6803 / Kazusa)).